A 95-amino-acid chain; its full sequence is Aspartyl/glutamyl-tRNA(Asn/Gln) amidotransferase subunit C (95 aa).

The protein belongs to the GatC family. Heterotrimer of A, B and C subunits.

The enzyme catalyses L-glutamyl-tRNA(Gln) + L-glutamine + ATP + H2O = L-glutaminyl-tRNA(Gln) + L-glutamate + ADP + phosphate + H(+). It carries out the reaction L-aspartyl-tRNA(Asn) + L-glutamine + ATP + H2O = L-asparaginyl-tRNA(Asn) + L-glutamate + ADP + phosphate + 2 H(+). Functionally, allows the formation of correctly charged Asn-tRNA(Asn) or Gln-tRNA(Gln) through the transamidation of misacylated Asp-tRNA(Asn) or Glu-tRNA(Gln) in organisms which lack either or both of asparaginyl-tRNA or glutaminyl-tRNA synthetases. The reaction takes place in the presence of glutamine and ATP through an activated phospho-Asp-tRNA(Asn) or phospho-Glu-tRNA(Gln). This chain is Aspartyl/glutamyl-tRNA(Asn/Gln) amidotransferase subunit C, found in Bradyrhizobium diazoefficiens (strain JCM 10833 / BCRC 13528 / IAM 13628 / NBRC 14792 / USDA 110).